Here is a 166-residue protein sequence, read N- to C-terminus: Large ribosomal subunit protein mL49 (166 aa).

The tract at residues R56–P78 is disordered.

The protein belongs to the mitochondrion-specific ribosomal protein mL49 family. As to quaternary structure, interacts with OXA1L.

The protein localises to the mitochondrion. The sequence is that of Large ribosomal subunit protein mL49 (MRPL49) from Macaca fascicularis (Crab-eating macaque).